A 470-amino-acid polypeptide reads, in one-letter code: ADAM DEC1 (470 aa).

A signal peptide spans 1–30 (MLRGISQLPAVATMSWVLLPVLWLIVQTQA). A propeptide spanning residues 31–205 (IAIKQTPELT…QGPIRISRSL (175 aa)) is cleaved from the precursor. A glycan (N-linked (GlcNAc...) asparagine) is linked at N61. Positions 173-200 (FTSNQEEQDPANHTCGVKSTDGKQGPIR) are disordered. A glycan (N-linked (GlcNAc...) (complex) asparagine) is linked at N184. The 195-residue stretch at 218 to 412 (KYIDLYLVLD…QKPKCLLQAP (195 aa)) folds into the Peptidase M12B domain. Residue N237 is glycosylated (N-linked (GlcNAc...) asparagine). 2 disulfides stabilise this stretch: C328–C407 and C369–C374. H352 contributes to the Zn(2+) binding site. E353 is an active-site residue. 2 residues coordinate Zn(2+): H356 and D362. The Disintegrin domain maps to 420 to 470 (TPVCGNHLLEVGEDCDCGSPKECTNLCCEALTCKLKPGTDCGGDAPNHTTE). The N-linked (GlcNAc...) asparagine glycan is linked to N466.

The cofactor is Zn(2+). In terms of tissue distribution, expressed highly in the small intestine and appendix, moderately in lymph node, mucosal lining of the colon, thymus, spleen and very weakly in the bone marrow. Predominantly expressed in dendritic cells (DC) of the germinal center. Weakly expressed in monocyte and highly expressed in macrophage. Absent in immature DC.

The protein localises to the secreted. In terms of biological role, may play an important role in the control of the immune response and during pregnancy. The chain is ADAM DEC1 (ADAMDEC1) from Homo sapiens (Human).